We begin with the raw amino-acid sequence, 275 residues long: Large ribosomal subunit protein uL2 (275 aa).

2 disordered regions span residues 24–48 and 224–264; these read LTTD…NAGD and VMNP…NKRT. The span at 31–42 shows a compositional bias: basic residues; sequence KPLTKTKQRTGG.

The protein belongs to the universal ribosomal protein uL2 family. Part of the 50S ribosomal subunit. Forms a bridge to the 30S subunit in the 70S ribosome.

Functionally, one of the primary rRNA binding proteins. Required for association of the 30S and 50S subunits to form the 70S ribosome, for tRNA binding and peptide bond formation. It has been suggested to have peptidyltransferase activity; this is somewhat controversial. Makes several contacts with the 16S rRNA in the 70S ribosome. The sequence is that of Large ribosomal subunit protein uL2 from Koribacter versatilis (strain Ellin345).